Consider the following 295-residue polypeptide: Ankyrin repeat and SOCS box protein 17 (295 aa).

An ANK repeat occupies 146 to 176 (SGITPLLYVAQTRQSNILKILLQYGILEREK). Positions 232–295 (LGRRPIISNW…RLQKYLNLES (64 aa)) constitute an SOCS box domain.

It belongs to the ankyrin SOCS box (ASB) family.

It functions in the pathway protein modification; protein ubiquitination. In terms of biological role, may be a substrate-recognition component of a SCF-like ECS (Elongin-Cullin-SOCS-box protein) E3 ubiquitin-protein ligase complex which mediates the ubiquitination and subsequent proteasomal degradation of target proteins. The polypeptide is Ankyrin repeat and SOCS box protein 17 (ASB17) (Canis lupus familiaris (Dog)).